The primary structure comprises 281 residues: Protein EMBRYO DEFECTIVE 1674 (281 aa).

Composition is skewed to polar residues over residues 1 to 14 (MTTT…QSLS) and 24 to 41 (PNTS…PNSS). The segment at 1 to 47 (MTTTRAKSKFQSLSACRFTPLPEPNTSPSTYSKTLPKPNSSPGTDGT) is disordered. Residues 66 to 153 (VTLSDWWLTK…LGFPYDWEDY (88 aa)) enclose the SANTA domain.

Required for normal embryo development. This is Protein EMBRYO DEFECTIVE 1674 from Arabidopsis thaliana (Mouse-ear cress).